The following is a 402-amino-acid chain: Non-homologous end joining protein Ku (402 aa).

The Ku domain occupies 12–185; it reads ISFGLVTIPV…VAALTGIAQP (174 aa). The tract at residues 261–402 is disordered; it reads QRAAGGATGG…GPDETAPGGP (142 aa). Low complexity-rich tracts occupy residues 299–308 and 332–343; these read GDPAASVPGV and VPGVPATAVPGT. Over residues 344–358 the composition is skewed to pro residues; that stretch reads PGAPVPTAPGVPSAP. Over residues 359 to 376 the composition is skewed to low complexity; it reads APGTSPTSVPGVQTAPNG.

It belongs to the prokaryotic Ku family. In terms of assembly, homodimer. Interacts with LigD.

Its function is as follows. With LigD forms a non-homologous end joining (NHEJ) DNA repair enzyme, which repairs dsDNA breaks with reduced fidelity. Binds linear dsDNA with 5'- and 3'- overhangs but not closed circular dsDNA nor ssDNA. Recruits and stimulates the ligase activity of LigD. The protein is Non-homologous end joining protein Ku of Symbiobacterium thermophilum (strain DSM 24528 / JCM 14929 / IAM 14863 / T).